The primary structure comprises 427 residues: UPF0597 protein CD630_32320 (427 aa).

The protein belongs to the UPF0597 family.

This is UPF0597 protein CD630_32320 from Clostridioides difficile (strain 630) (Peptoclostridium difficile).